A 330-amino-acid polypeptide reads, in one-letter code: Cathepsin K (330 aa).

Positions 1 to 16 are cleaved as a signal peptide; the sequence is MWGLEVLLLLPMASFA. Residues 17-115 constitute a propeptide, activation peptide; sequence LYPEEILDTQ…TLYIPDWESR (99 aa). N-linked (GlcNAc...) asparagine glycosylation occurs at Asn-104. 3 disulfides stabilise this stretch: Cys-137–Cys-178, Cys-171–Cys-211, and Cys-270–Cys-319. Cys-140 is a catalytic residue. Catalysis depends on residues His-277 and Asn-297.

It belongs to the peptidase C1 family.

It is found in the lysosome. It localises to the secreted. Its subcellular location is the apical cell membrane. It catalyses the reaction Broad proteolytic activity. With small-molecule substrates and inhibitors, the major determinant of specificity is P2, which is preferably Leu, Met &gt; Phe, and not Arg.. Its function is as follows. Thiol protease involved in osteoclastic bone resorption and may participate partially in the disorder of bone remodeling. Displays potent endoprotease activity against fibrinogen at acid pH. May play an important role in extracellular matrix degradation. Involved in the release of thyroid hormone thyroxine (T4) by limited proteolysis of TG/thyroglobulin in the thyroid follicle lumen. The polypeptide is Cathepsin K (CTSK) (Canis lupus familiaris (Dog)).